Consider the following 335-residue polypeptide: Holliday junction branch migration complex subunit RuvB (335 aa).

Residues 1–181 (MDRIVEIEKY…FGMQFRLEFY (181 aa)) are large ATPase domain (RuvB-L). ATP-binding positions include L20, R21, G62, K65, T66, T67, 128-130 (EDY), R171, Y181, and R218. T66 contributes to the Mg(2+) binding site. A small ATPAse domain (RuvB-S) region spans residues 182–252 (KDSELALILQ…RANEALNSLG (71 aa)). A head domain (RuvB-H) region spans residues 255 to 335 (ELGFDAMDLR…LNYEKTLFEE (81 aa)). Residues R309 and R314 each contribute to the DNA site.

This sequence belongs to the RuvB family. Homohexamer. Forms an RuvA(8)-RuvB(12)-Holliday junction (HJ) complex. HJ DNA is sandwiched between 2 RuvA tetramers; dsDNA enters through RuvA and exits via RuvB. An RuvB hexamer assembles on each DNA strand where it exits the tetramer. Each RuvB hexamer is contacted by two RuvA subunits (via domain III) on 2 adjacent RuvB subunits; this complex drives branch migration. In the full resolvosome a probable DNA-RuvA(4)-RuvB(12)-RuvC(2) complex forms which resolves the HJ.

Its subcellular location is the cytoplasm. The enzyme catalyses ATP + H2O = ADP + phosphate + H(+). In terms of biological role, the RuvA-RuvB-RuvC complex processes Holliday junction (HJ) DNA during genetic recombination and DNA repair, while the RuvA-RuvB complex plays an important role in the rescue of blocked DNA replication forks via replication fork reversal (RFR). RuvA specifically binds to HJ cruciform DNA, conferring on it an open structure. The RuvB hexamer acts as an ATP-dependent pump, pulling dsDNA into and through the RuvAB complex. RuvB forms 2 homohexamers on either side of HJ DNA bound by 1 or 2 RuvA tetramers; 4 subunits per hexamer contact DNA at a time. Coordinated motions by a converter formed by DNA-disengaged RuvB subunits stimulates ATP hydrolysis and nucleotide exchange. Immobilization of the converter enables RuvB to convert the ATP-contained energy into a lever motion, pulling 2 nucleotides of DNA out of the RuvA tetramer per ATP hydrolyzed, thus driving DNA branch migration. The RuvB motors rotate together with the DNA substrate, which together with the progressing nucleotide cycle form the mechanistic basis for DNA recombination by continuous HJ branch migration. Branch migration allows RuvC to scan DNA until it finds its consensus sequence, where it cleaves and resolves cruciform DNA. In Campylobacter jejuni (strain RM1221), this protein is Holliday junction branch migration complex subunit RuvB.